The following is a 1324-amino-acid chain: Coiled-coil domain-containing protein 171 (1324 aa).

Coiled coils occupy residues 29–296 (KNET…RAAH), 325–393 (AEAV…RLQY), 453–521 (FSVV…KCAD), 599–712 (SELC…VREN), and 981–1145 (FTQR…KECV). Residues 1301 to 1312 (PHSLSSQSSPGV) are compositionally biased toward polar residues. Residues 1301 to 1324 (PHSLSSQSSPGVPTNAKRPSQIGL) form a disordered region.

This chain is Coiled-coil domain-containing protein 171 (Ccdc171), found in Mus musculus (Mouse).